The chain runs to 298 residues: uncharacterized protein (298 aa).

Residues 1-17 (MLTKSAENKRNRKDDSM) show a composition bias toward basic and acidic residues. Positions 1–22 (MLTKSAENKRNRKDDSMRPGQQ) are disordered. The region spanning 167–227 (NKELTGTVYR…EDGSVNLSLL (61 aa)) is the S1 motif domain.

This is an uncharacterized protein from Bacillus subtilis (strain 168).